The sequence spans 891 residues: Iron-regulated surface determinant protein H (891 aa).

The signal sequence occupies residues 1-40 (MNKHHPKLRSFYSIRKSTLGVASVIVSTLFLITSQHQAQA). The segment at 42–77 (ENTNTSDKISENQNNNATTTQQPKDTNQTQPATQPV) is disordered. Residues 53–63 (NQNNNATTTQQ) show a composition bias toward low complexity. The span at 64-77 (PKDTNQTQPATQPV) shows a compositional bias: polar residues. Residues 105-232 (DIGPREQVNF…IYNDPSLVKS (128 aa)) form the NEAT 1 domain. Residues 239-324 (VTNDQSSSDA…NQSDVNQQYP (86 aa)) are disordered. The segment covering 240-276 (TNDQSSSDASNQTNTNTSNQNTSTTNNANNQPQATTN) has biased composition (low complexity). The span at 277–323 (MSQPAQPKSSANADQASSQPAHETNSNGNTNDKTNESSNQSDVNQQY) shows a compositional bias: polar residues. NEAT domains follow at residues 345 to 471 (TADN…DYVD) and 543 to 660 (QLTD…TKDD). Disordered stretches follow at residues 657-718 (TKDD…DADN), 752-777 (IAKD…KDSN), and 835-864 (TVKT…GETT). Polar residues-rich tracts occupy residues 663–677 (SQNN…QTGQ) and 687–697 (AENSSTATNPK). The span at 698–718 (DASDKADVIEPESDVVKDADN) shows a compositional bias: basic and acidic residues. A compositionally biased stretch (basic and acidic residues) spans 835 to 850 (TVKTKEKAGTPSKENK). Residues 851–864 (LSQSKMLPKTGETT) show a composition bias toward polar residues. The LPXTG sorting signal signature appears at 857-861 (LPKTG). Position 860 is a pentaglycyl murein peptidoglycan amidated threonine (Thr860). Positions 861–891 (GETTSSQSWWGLYALLGMLALFIPKFRKESK) are cleaved as a propeptide — removed by sortase.

This sequence belongs to the IsdH family.

The protein resides in the secreted. Its subcellular location is the cell wall. Binds human plasma haptoglobin-hemoglobin complexes, haptoglobin and hemoglobin. Binds haptoglobin-hemoglobin complexes with significantly higher affinity than haptoglobin alone. The sequence is that of Iron-regulated surface determinant protein H (isdH) from Staphylococcus aureus (strain Mu50 / ATCC 700699).